Reading from the N-terminus, the 70-residue chain is Brevinin-1Vb (70 aa).

An N-terminal signal peptide occupies residues 1–22; it reads MFTLKKSLLLLFFLGTINLSLC. The propeptide occupies 23-44; that stretch reads EEERNAEEERRDEPDEMNVEVE. An intrachain disulfide couples cysteine 64 to cysteine 70.

As to expression, expressed by the skin glands.

It localises to the secreted. In terms of biological role, antimicrobial peptide. The sequence is that of Brevinin-1Vb from Odorrana versabilis (Chinese bamboo leaf odorous frog).